Consider the following 465-residue polypeptide: Siroheme synthase (465 aa).

The precorrin-2 dehydrogenase /sirohydrochlorin ferrochelatase stretch occupies residues 1–203 (MDFLPLFHSL…GRPAEAERLL (203 aa)). NAD(+)-binding positions include 22–23 (EV) and 43–44 (PQ). The residue at position 128 (Ser-128) is a Phosphoserine. The segment at 217–465 (GEVYLVGAGP…AWFEGAREDA (249 aa)) is uroporphyrinogen-III C-methyltransferase. S-adenosyl-L-methionine is bound at residue Pro-226. Asp-249 acts as the Proton acceptor in catalysis. Lys-271 acts as the Proton donor in catalysis. Residues 302–304 (GGD), Ile-307, 332–333 (TA), Met-384, and Gly-413 contribute to the S-adenosyl-L-methionine site.

In the N-terminal section; belongs to the precorrin-2 dehydrogenase / sirohydrochlorin ferrochelatase family. This sequence in the C-terminal section; belongs to the precorrin methyltransferase family.

The catalysed reaction is uroporphyrinogen III + 2 S-adenosyl-L-methionine = precorrin-2 + 2 S-adenosyl-L-homocysteine + H(+). It carries out the reaction precorrin-2 + NAD(+) = sirohydrochlorin + NADH + 2 H(+). The enzyme catalyses siroheme + 2 H(+) = sirohydrochlorin + Fe(2+). The protein operates within cofactor biosynthesis; adenosylcobalamin biosynthesis; precorrin-2 from uroporphyrinogen III: step 1/1. Its pathway is cofactor biosynthesis; adenosylcobalamin biosynthesis; sirohydrochlorin from precorrin-2: step 1/1. It participates in porphyrin-containing compound metabolism; siroheme biosynthesis; precorrin-2 from uroporphyrinogen III: step 1/1. It functions in the pathway porphyrin-containing compound metabolism; siroheme biosynthesis; siroheme from sirohydrochlorin: step 1/1. The protein operates within porphyrin-containing compound metabolism; siroheme biosynthesis; sirohydrochlorin from precorrin-2: step 1/1. Its function is as follows. Multifunctional enzyme that catalyzes the SAM-dependent methylations of uroporphyrinogen III at position C-2 and C-7 to form precorrin-2 via precorrin-1. Then it catalyzes the NAD-dependent ring dehydrogenation of precorrin-2 to yield sirohydrochlorin. Finally, it catalyzes the ferrochelation of sirohydrochlorin to yield siroheme. This chain is Siroheme synthase, found in Pseudomonas aeruginosa (strain ATCC 15692 / DSM 22644 / CIP 104116 / JCM 14847 / LMG 12228 / 1C / PRS 101 / PAO1).